A 74-amino-acid chain; its full sequence is Ubiquitin-like protein FUBI (74 aa).

The protein belongs to the ubiquitin family.

Confers arsenite resistance. The chain is Ubiquitin-like protein FUBI (FAU) from Cricetulus griseus (Chinese hamster).